A 146-amino-acid chain; its full sequence is 3-dehydroquinate dehydratase (146 aa).

Tyr22 (proton acceptor) is an active-site residue. Substrate is bound by residues Asn73, His79, and Asp86. His99 (proton donor) is an active-site residue. Substrate is bound by residues 100–101 and Arg110; that span reads IS.

It belongs to the type-II 3-dehydroquinase family. As to quaternary structure, homododecamer.

The catalysed reaction is 3-dehydroquinate = 3-dehydroshikimate + H2O. It participates in metabolic intermediate biosynthesis; chorismate biosynthesis; chorismate from D-erythrose 4-phosphate and phosphoenolpyruvate: step 3/7. Catalyzes a trans-dehydration via an enolate intermediate. The sequence is that of 3-dehydroquinate dehydratase from Prochlorococcus marinus (strain MIT 9515).